Here is a 543-residue protein sequence, read N- to C-terminus: Glutamyl-tRNA(Gln) amidotransferase subunit A, chloroplastic/mitochondrial (543 aa).

Residues Lys121 and Ser196 each act as charge relay system in the active site. Catalysis depends on Ser220, which acts as the Acyl-ester intermediate.

Belongs to the amidase family. GatA subfamily. As to quaternary structure, subunit of the heterotrimeric GatCAB amidotransferase (AdT) complex, composed of A, B and C subunits.

It localises to the mitochondrion. The protein resides in the plastid. Its subcellular location is the chloroplast stroma. The enzyme catalyses L-glutamyl-tRNA(Gln) + L-glutamine + ATP + H2O = L-glutaminyl-tRNA(Gln) + L-glutamate + ADP + phosphate + H(+). In terms of biological role, allows the formation of correctly charged Gln-tRNA(Gln) through the transamidation of misacylated Glu-tRNA(Gln) in chloroplasts and mitochondria. The reaction takes place in the presence of glutamine and ATP through an activated gamma-phospho-Glu-tRNA(Gln). This Zea mays (Maize) protein is Glutamyl-tRNA(Gln) amidotransferase subunit A, chloroplastic/mitochondrial.